The following is a 2225-amino-acid chain: Multifunctional protein CAD (2225 aa).

The residue at position 2 (alanine 2) is an N-acetylalanine. A GATase (Glutamine amidotransferase) region spans residues 2 to 365; it reads AALVLEDGSV…TVREAAAGNI (364 aa). Residues serine 44, glycine 222, and glycine 224 each coordinate L-glutamine. The 187-residue stretch at 177-363 folds into the Glutamine amidotransferase type-1 domain; that stretch reads RICALDCGLK…LETVREAAAG (187 aa). The active-site Nucleophile; for GATase activity is cysteine 252. Positions 253, 256, 294, 296, and 297 each coordinate L-glutamine. Active-site for GATase activity residues include histidine 336 and glutamate 338. Residues 366 to 394 form a linker region; it reads GGQTVRERLAQRLCPPELPIPGSGLPPPR. The tract at residues 395–933 is CPSase A; the sequence is KVLILGSGGL…NTHDLDFRAP (539 aa). Residues 395-1455 form a CPSase (Carbamoyl-phosphate synthase) region; the sequence is KVLILGSGGL…APPLKVHVDC (1061 aa). Threonine 456 is modified (phosphothreonine; by MAPK1). Positions 515, 555, 561, 562, 592, 599, 625, 626, 627, 668, and 682 each coordinate ATP. Residues 519-711 enclose the ATP-grasp 1 domain; it reads AARMAEIGEH…LAYVAAKLAL (193 aa). Mg(2+) is bound by residues glutamine 668, glutamate 682, and asparagine 684. 3 residues coordinate Mn(2+): glutamine 668, glutamate 682, and asparagine 684. Lysine 747 is modified (N6-acetyllysine). The tract at residues 934–1455 is CPSase B; it reads HVLVLGSGVY…APPLKVHVDC (522 aa). Phosphoserine is present on serine 1038. The ATP-grasp 2 domain maps to 1052 to 1243; the sequence is SRLLDTIGIS…LVALATRIIM (192 aa). Arginine 1088, lysine 1127, isoleucine 1129, glutamate 1134, glycine 1159, valine 1160, histidine 1161, serine 1162, glutamine 1202, and glutamate 1214 together coordinate ATP. Mg(2+)-binding residues include glutamine 1202, glutamate 1214, and asparagine 1216. 3 residues coordinate Mn(2+): glutamine 1202, glutamate 1214, and asparagine 1216. Residues 1308–1462 form the MGS-like domain; it reads FKIPEKNILL…VDCMTSQKLV (155 aa). Serine 1406 is subject to Phosphoserine; by PKA. Lysine 1411 carries the N6-acetyllysine modification. The interval 1456 to 1788 is DHOase (dihydroorotase); it reads MTSQKLVRLP…VKGTVRRVVL (333 aa). 2 residues coordinate Zn(2+): histidine 1471 and histidine 1473. (S)-dihydroorotate contacts are provided by arginine 1475 and asparagine 1505. Lysine 1556, histidine 1590, cysteine 1613, histidine 1614, and glutamate 1637 together coordinate Zn(2+). Residue lysine 1556 is modified to N6-carboxylysine. Arginine 1661 provides a ligand contact to (S)-dihydroorotate. Residue aspartate 1686 participates in Zn(2+) binding. Aspartate 1686 acts as the For DHOase activity in catalysis. (S)-dihydroorotate contacts are provided by histidine 1690 and proline 1702. A linker region spans residues 1789–1917; the sequence is RGEVAYIDGQ…GLLHPQMSPL (129 aa). The segment at 1815-1885 is disordered; sequence GVVPQPPPST…VVEPELMGTP (71 aa). Positions 1825–1834 are enriched in low complexity; it reads PATTEITTTP. Serine 1859 bears the Phosphoserine mark. Residues 1866–1878 are compositionally biased toward basic and acidic residues; the sequence is EEPKEKPPRKVVE. Threonine 1884 is subject to Phosphothreonine. A phosphoserine mark is found at serine 1900 and serine 1938. An ATCase (Aspartate transcarbamylase) region spans residues 1918–2225; sequence LHSLVGQHIL…ALLATVLGRF (308 aa). Residues arginine 1975 and threonine 1976 each contribute to the carbamoyl phosphate site. Lysine 2003 provides a ligand contact to L-aspartate. Carbamoyl phosphate contacts are provided by arginine 2024, histidine 2052, and glutamine 2055. Arginine 2085 and arginine 2146 together coordinate L-aspartate. Carbamoyl phosphate contacts are provided by methionine 2185 and proline 2186.

This sequence in the N-terminal section; belongs to the CarA family. It in the 2nd section; belongs to the CarB family. In the 3rd section; belongs to the metallo-dependent hydrolases superfamily. DHOase family. CAD subfamily. The protein in the C-terminal section; belongs to the aspartate/ornithine carbamoyltransferase superfamily. ATCase family. As to quaternary structure, homohexamer. Interacts with CIPC. Zn(2+) serves as cofactor. The cofactor is Mg(2+). Requires Mn(2+) as cofactor. Post-translationally, activated by MAP kinase (Erk1/2) phosphorylation just prior to the S phase of the cell cycle, when the demand for pyrimidine nucleotides is greatest, and down-regulated as the cells emerge from S phase by protein kinase A (PKA) phosphorylation. Phosphorylation at Ser-1859 by RPS6KB1 downstream of MTOR promotes oligomerization and stimulates dihydroorotase activity. Phosphorylation at Ser-1406 reduces sensitivity to feedback inhibition by UTP.

It is found in the cytoplasm. The protein resides in the nucleus. The catalysed reaction is hydrogencarbonate + L-glutamine + 2 ATP + H2O = carbamoyl phosphate + L-glutamate + 2 ADP + phosphate + 2 H(+). It catalyses the reaction L-glutamine + H2O = L-glutamate + NH4(+). The enzyme catalyses hydrogencarbonate + NH4(+) + 2 ATP = carbamoyl phosphate + 2 ADP + phosphate + 2 H(+). It carries out the reaction carbamoyl phosphate + L-aspartate = N-carbamoyl-L-aspartate + phosphate + H(+). The catalysed reaction is (S)-dihydroorotate + H2O = N-carbamoyl-L-aspartate + H(+). It functions in the pathway pyrimidine metabolism; UMP biosynthesis via de novo pathway; (S)-dihydroorotate from bicarbonate: step 1/3. The protein operates within pyrimidine metabolism; UMP biosynthesis via de novo pathway; (S)-dihydroorotate from bicarbonate: step 2/3. It participates in pyrimidine metabolism; UMP biosynthesis via de novo pathway; (S)-dihydroorotate from bicarbonate: step 3/3. Its activity is regulated as follows. Allosterically regulated and controlled by phosphorylation. 5-phosphoribose 1-diphosphate (PRPP) is an activator while UMP and UTP are inhibitors of the CPSase reaction. In terms of biological role, multifunctional protein that encodes the first 3 enzymatic activities of the de novo pyrimidine pathway: carbamoylphosphate synthetase (CPSase; EC 6.3.5.5), aspartate transcarbamylase (ATCase; EC 2.1.3.2) and dihydroorotase (DHOase; EC 3.5.2.3). The CPSase-function is accomplished in 2 steps, by a glutamine-dependent amidotransferase activity (GATase) that binds and cleaves glutamine to produce ammonia, followed by an ammonium-dependent carbamoyl phosphate synthetase, which reacts with the ammonia, hydrogencarbonate and ATP to form carbamoyl phosphate. The endogenously produced carbamoyl phosphate is sequestered and channeled to the ATCase active site. ATCase then catalyzes the formation of carbamoyl-L-aspartate from L-aspartate and carbamoyl phosphate. In the last step, DHOase catalyzes the cyclization of carbamoyl aspartate to dihydroorotate. The polypeptide is Multifunctional protein CAD (Cad) (Mus musculus (Mouse)).